Consider the following 145-residue polypeptide: Pleckstrin homology domain-containing protein 1 (145 aa).

The region spanning 26 to 127 (NPERSGWLTK…WINSIGRSIV (102 aa)) is the PH domain. The segment at 29–53 (RSGWLTKQGDYIKTWRRRWFVLKRG) is binds specifically PtdIns3P.

In terms of assembly, binds PtdIns3P. Ubiquitously expressed.

The protein resides in the cytoplasm. Binds specifically to phosphatidylinositol 3-phosphate (PtdIns3P), but not to other phosphoinositides. The polypeptide is Pleckstrin homology domain-containing protein 1 (PH1) (Arabidopsis thaliana (Mouse-ear cress)).